We begin with the raw amino-acid sequence, 317 residues long: Probable RuBisCO transcriptional regulator (317 aa).

Residues 6–63 (FTLDQLRILKAIAKEGSFKKAANSLYVSQPAISLQIQNLERQLNVALFERGNKKATLT) enclose the HTH lysR-type domain. The H-T-H motif DNA-binding region spans 23–42 (FKKAANSLYVSQPAISLQIQ).

The protein belongs to the LysR transcriptional regulatory family.

It localises to the plastid. The protein localises to the chloroplast. Trans-acting transcriptional regulator of RuBisCO genes (rbcL and rbcS) expression. The polypeptide is Probable RuBisCO transcriptional regulator (rbcR) (Porphyra purpurea (Red seaweed)).